Here is a 281-residue protein sequence, read N- to C-terminus: Pantothenate synthetase (281 aa).

Residue 31-38 (MGNLHAGH) participates in ATP binding. The active-site Proton donor is the H38. Q62 provides a ligand contact to (R)-pantoate. Q62 contributes to the beta-alanine binding site. ATP is bound at residue 150–153 (GKKD). Q156 is a binding site for (R)-pantoate. ATP is bound by residues V179 and 187-190 (MSSR).

Belongs to the pantothenate synthetase family. Homodimer.

The protein resides in the cytoplasm. The catalysed reaction is (R)-pantoate + beta-alanine + ATP = (R)-pantothenate + AMP + diphosphate + H(+). The protein operates within cofactor biosynthesis; (R)-pantothenate biosynthesis; (R)-pantothenate from (R)-pantoate and beta-alanine: step 1/1. In terms of biological role, catalyzes the condensation of pantoate with beta-alanine in an ATP-dependent reaction via a pantoyl-adenylate intermediate. This Xylella fastidiosa (strain M12) protein is Pantothenate synthetase.